Here is a 603-residue protein sequence, read N- to C-terminus: Membrane protein insertase YidC (603 aa).

Residues 7 to 27 (FFITIALSVLILAVWQYFYVL) form a helical membrane-spanning segment. Positions 38-51 (RVEQQRVEEQKKAA) are enriched in basic and acidic residues. The disordered stretch occupies residues 38–76 (RVEQQRVEEQKKAAEAANPGAGTPAPAPGTIPNAPGGDT). The segment covering 52–74 (EAANPGAGTPAPAPGTIPNAPGG) has biased composition (low complexity). 5 helical membrane-spanning segments follow: residues 352-372 (FDLLIDWGWFHFITKPMFWLI), 378-398 (FLGNFGLAILATTVIVKALFF), 452-472 (WPVALQIPVFFSLYKVLYITI), 497-517 (LFGLIPVTLPHMLMIGVWPLI), and 540-560 (IFTWMPVIFTFMMAGFPAGLV).

The protein belongs to the OXA1/ALB3/YidC family. Type 1 subfamily. Interacts with the Sec translocase complex via SecD. Specifically interacts with transmembrane segments of nascent integral membrane proteins during membrane integration.

It is found in the cell inner membrane. In terms of biological role, required for the insertion and/or proper folding and/or complex formation of integral membrane proteins into the membrane. Involved in integration of membrane proteins that insert both dependently and independently of the Sec translocase complex, as well as at least some lipoproteins. Aids folding of multispanning membrane proteins. This Mesorhizobium japonicum (strain LMG 29417 / CECT 9101 / MAFF 303099) (Mesorhizobium loti (strain MAFF 303099)) protein is Membrane protein insertase YidC.